Here is a 379-residue protein sequence, read N- to C-terminus: Lipid-A-disaccharide synthase (379 aa).

The protein belongs to the LpxB family.

It catalyses the reaction a lipid X + a UDP-2-N,3-O-bis[(3R)-3-hydroxyacyl]-alpha-D-glucosamine = a lipid A disaccharide + UDP + H(+). It participates in bacterial outer membrane biogenesis; LPS lipid A biosynthesis. In terms of biological role, condensation of UDP-2,3-diacylglucosamine and 2,3-diacylglucosamine-1-phosphate to form lipid A disaccharide, a precursor of lipid A, a phosphorylated glycolipid that anchors the lipopolysaccharide to the outer membrane of the cell. This is Lipid-A-disaccharide synthase from Persephonella marina (strain DSM 14350 / EX-H1).